Here is a 332-residue protein sequence, read N- to C-terminus: L-lactate dehydrogenase A chain (332 aa).

An N-acetylalanine modification is found at Ala2. Position 5 is an N6-acetyllysine; alternate (Lys5). N6-succinyllysine; alternate is present on Lys5. The residue at position 14 (Lys14) is an N6-acetyllysine. 29–57 (GAVGMACAISILMKDLADEVALVDVMEDK) is a binding site for NAD(+). Position 57 is an N6-acetyllysine; alternate (Lys57). A Glycyl lysine isopeptide (Lys-Gly) (interchain with G-Cter in SUMO2); alternate cross-link involves residue Lys57. An N6-acetyllysine modification is found at Lys81. Arg106 is a binding site for substrate. N6-acetyllysine; alternate is present on Lys118. An N6-succinyllysine; alternate modification is found at Lys118. Residue Lys126 is modified to N6-acetyllysine. Asn138 is a binding site for NAD(+). 2 residues coordinate substrate: Asn138 and Arg169. His193 functions as the Proton acceptor in the catalytic mechanism. N6-acetyllysine occurs at positions 224 and 232. At Tyr239 the chain carries Phosphotyrosine. An N6-acetyllysine modification is found at Lys243. Thr248 serves as a coordination point for substrate. Position 309 is a phosphothreonine (Thr309). N6-acetyllysine; alternate is present on Lys318. The residue at position 318 (Lys318) is an N6-succinyllysine; alternate. Thr322 bears the Phosphothreonine mark.

This sequence belongs to the LDH/MDH superfamily. LDH family. As to quaternary structure, homotetramer. Interacts with PTEN upstream reading frame protein MP31. Post-translationally, ISGylated.

It is found in the cytoplasm. It carries out the reaction (S)-lactate + NAD(+) = pyruvate + NADH + H(+). Its pathway is fermentation; pyruvate fermentation to lactate; (S)-lactate from pyruvate: step 1/1. Its function is as follows. Interconverts simultaneously and stereospecifically pyruvate and lactate with concomitant interconversion of NADH and NAD(+). This chain is L-lactate dehydrogenase A chain (LDHA), found in Bos mutus grunniens (Wild yak).